The primary structure comprises 244 residues: Chaperone protein FimB/FhaD (244 aa).

An N-terminal signal peptide occupies residues 1-24; the sequence is MARWRRRLGVAALGAAMLASLAPA.

Belongs to the periplasmic pilus chaperone family.

Its subcellular location is the periplasm. Its function is as follows. Required for the biogenesis of the filamentous hemagglutinin and the fimbria. This is Chaperone protein FimB/FhaD (fimB) from Bordetella pertussis (strain Tohama I / ATCC BAA-589 / NCTC 13251).